A 284-amino-acid polypeptide reads, in one-letter code: 2-dehydro-3-deoxyphosphooctonate aldolase (284 aa).

Belongs to the KdsA family.

It is found in the cytoplasm. The enzyme catalyses D-arabinose 5-phosphate + phosphoenolpyruvate + H2O = 3-deoxy-alpha-D-manno-2-octulosonate-8-phosphate + phosphate. It functions in the pathway carbohydrate biosynthesis; 3-deoxy-D-manno-octulosonate biosynthesis; 3-deoxy-D-manno-octulosonate from D-ribulose 5-phosphate: step 2/3. It participates in bacterial outer membrane biogenesis; lipopolysaccharide biosynthesis. The sequence is that of 2-dehydro-3-deoxyphosphooctonate aldolase from Salmonella enteritidis PT4 (strain P125109).